The primary structure comprises 33 residues: Dolabellanin-B2 (33 aa).

Contains two disulfide bonds. Post-translationally, up to two of the methionines may be oxidized to methionine sulfoxides.

The protein resides in the secreted. Has antibacterial activity against Gram-negative bacteria E.coli JM109 and DH5-alpha, H.influenza IID 983, and V.vulnificus RIMD 2219009. Has antibacterial activity against Gram-positive bacteria S.aureus IID 1677, B.subtilis RIMD 0225014 and L.monocytogenes VIU206. Possesses antifungal activity against S.cerevisiae A581A, S.pombe IFO 1628, C.albicans ATCC 36232 and TIMM-1623, and C.tropicalis TIMM-0313. In Dolabella auricularia (Shoulderblade sea cat), this protein is Dolabellanin-B2.